A 248-amino-acid polypeptide reads, in one-letter code: Mannose-binding protein C (248 aa).

A signal peptide spans 1–20; it reads MSPFLSLPLLLLSVLSASYS. Residues 36-112 form a disordered region; sequence IACSSPGING…GDSSLAASER (77 aa). A Collagen-like domain is found at 42-99; sequence GINGFPGKDGRDGTKGEKGEPGQGLRGLQGPPGKLGPPGNPGPSGSPGAKGQKGDPGA. Position 47 is a 4-hydroxyproline (Pro-47). Over residues 49 to 61 the composition is skewed to basic and acidic residues; the sequence is KDGRDGTKGEKGE. Residues Pro-73, Pro-79, Pro-82, and Pro-88 each carry the 4-hydroxyproline modification. Positions 112–130 form a coiled coil; the sequence is RKALQTEMARIKKWVTFSL. The C-type lectin domain occupies 134 to 245; it reads VGKKLFLSNG…CSSSHLAICE (112 aa). 2 cysteine pairs are disulfide-bonded: Cys-155/Cys-244 and Cys-222/Cys-236.

Oligomeric complex of 3 or more homotrimers. Interacts with MASP1 and MASP2. Interacts with MEP1A and MEP1B and may inhibit their catalytic activity. Hydroxylation on proline residues within the sequence motif, GXPG, is most likely to be 4-hydroxy as this fits the requirement for 4-hydroxylation in vertebrates.

It is found in the secreted. Functionally, calcium-dependent lectin involved in innate immune defense. Binds mannose, fucose and N-acetylglucosamine on different microorganisms and activates the lectin complement pathway. Binds to late apoptotic cells, as well as to apoptotic blebs and to necrotic cells, but not to early apoptotic cells, facilitating their uptake by macrophages. This Saguinus oedipus (Cotton-top tamarin) protein is Mannose-binding protein C (MBL2).